The primary structure comprises 260 residues: Indole-3-glycerol phosphate synthase (260 aa).

Belongs to the TrpC family.

The enzyme catalyses 1-(2-carboxyphenylamino)-1-deoxy-D-ribulose 5-phosphate + H(+) = (1S,2R)-1-C-(indol-3-yl)glycerol 3-phosphate + CO2 + H2O. It functions in the pathway amino-acid biosynthesis; L-tryptophan biosynthesis; L-tryptophan from chorismate: step 4/5. This chain is Indole-3-glycerol phosphate synthase, found in Leifsonia xyli subsp. xyli (strain CTCB07).